A 99-amino-acid chain; its full sequence is Plastocyanin (99 aa).

A Plastocyanin-like domain is found at 1 to 99 (LDVLLGGDDG…AGMVGKVTVN (99 aa)). Cu cation contacts are provided by His-37, Cys-84, His-87, and Met-92.

It belongs to the plastocyanin family. Cu(2+) serves as cofactor.

The protein resides in the plastid. Its subcellular location is the chloroplast thylakoid membrane. Functionally, participates in electron transfer between P700 and the cytochrome b6-f complex in photosystem I. This Solanum tuberosum (Potato) protein is Plastocyanin (PETE).